Reading from the N-terminus, the 63-residue chain is Large ribosomal subunit protein uL29 (63 aa).

The protein belongs to the universal ribosomal protein uL29 family.

The chain is Large ribosomal subunit protein uL29 (rpmC) from Aggregatibacter actinomycetemcomitans (Actinobacillus actinomycetemcomitans).